A 404-amino-acid chain; its full sequence is tRNA (carboxymethyluridine(34)-5-O)-methyltransferase (404 aa).

S238 carries the phosphoserine modification.

Interacts with TRM112A and TRM112B.

The enzyme catalyses 5-(carboxymethyl)uridine(34) in tRNA + S-adenosyl-L-methionine = 5-(2-methoxy-2-oxoethyl)uridine(34) in tRNA + S-adenosyl-L-homocysteine. Functionally, catalyzes the methylation of 5-carboxymethyl uridine to 5-methylcarboxymethyl uridine at the wobble position of the anticodon loop in tRNA via its methyltransferase domain. Catalyzes the last step in the formation of 5-methylcarboxymethyl uridine at the wobble position of the anticodon loop in target tRNA. This is tRNA (carboxymethyluridine(34)-5-O)-methyltransferase from Arabidopsis thaliana (Mouse-ear cress).